The sequence spans 256 residues: Thiazole synthase (256 aa).

The active-site Schiff-base intermediate with DXP is Lys96. Residues Gly157, 184 to 185 (AG), and 206 to 207 (NT) each bind 1-deoxy-D-xylulose 5-phosphate.

It belongs to the ThiG family. In terms of assembly, homotetramer. Forms heterodimers with either ThiH or ThiS.

The protein resides in the cytoplasm. The catalysed reaction is [ThiS sulfur-carrier protein]-C-terminal-Gly-aminoethanethioate + 2-iminoacetate + 1-deoxy-D-xylulose 5-phosphate = [ThiS sulfur-carrier protein]-C-terminal Gly-Gly + 2-[(2R,5Z)-2-carboxy-4-methylthiazol-5(2H)-ylidene]ethyl phosphate + 2 H2O + H(+). It functions in the pathway cofactor biosynthesis; thiamine diphosphate biosynthesis. Functionally, catalyzes the rearrangement of 1-deoxy-D-xylulose 5-phosphate (DXP) to produce the thiazole phosphate moiety of thiamine. Sulfur is provided by the thiocarboxylate moiety of the carrier protein ThiS. In vitro, sulfur can be provided by H(2)S. The sequence is that of Thiazole synthase from Brucella canis (strain ATCC 23365 / NCTC 10854 / RM-666).